A 395-amino-acid polypeptide reads, in one-letter code: Aspergillopepsin-1 (395 aa).

A signal peptide spans 1–20 (MVVFSKVTAVVVGLSTIVSA). Residues 21–70 (VPVVQPRKGFTINQVARPVTNKKTVNLPAVYANALTKYGGTVPDSVKAAA) constitute a propeptide, activation peptide. One can recognise a Peptidase A1 domain in the interval 86-392 (YLTPVKVGGT…DSQGPRLGFA (307 aa)). Active-site residues include D102 and D284. A disulfide bridge links C320 with C355.

It belongs to the peptidase A1 family. As to quaternary structure, monomer.

Its subcellular location is the secreted. It catalyses the reaction Hydrolysis of proteins with broad specificity. Generally favors hydrophobic residues in P1 and P1', but also accepts Lys in P1, which leads to activation of trypsinogen. Does not clot milk.. Functionally, secreted aspartic endopeptidase that allows assimilation of proteinaceous substrates. The scissile peptide bond is attacked by a nucleophilic water molecule activated by two aspartic residues in the active site. Shows a broad primary substrate specificity. Favors hydrophobic residues at the P1 and P1' positions, but also accepts a lysine residue in the P1 position, leading to the activation of trypsinogen and chymotrypsinogen A. In Aspergillus fumigatus (strain CBS 144.89 / FGSC A1163 / CEA10) (Neosartorya fumigata), this protein is Aspergillopepsin-1 (pepA).